A 102-amino-acid polypeptide reads, in one-letter code: Citrate lyase acyl carrier protein (102 aa).

An O-(phosphoribosyl dephospho-coenzyme A)serine modification is found at Ser14.

This sequence belongs to the CitD family. As to quaternary structure, oligomer with a subunit composition of (alpha,beta,gamma)6.

The protein resides in the cytoplasm. Functionally, covalent carrier of the coenzyme of citrate lyase. This is Citrate lyase acyl carrier protein from Streptococcus pyogenes serotype M18 (strain MGAS8232).